The following is a 257-amino-acid chain: Putative hydro-lyase Bcenmc03_3969 (257 aa).

Belongs to the D-glutamate cyclase family.

The sequence is that of Putative hydro-lyase Bcenmc03_3969 from Burkholderia orbicola (strain MC0-3).